The sequence spans 554 residues: MLO-like protein 14 (554 aa).

Residues 1–13 (MREETEPSERTLG) lie on the Extracellular side of the membrane. The chain crosses the membrane as a helical span at residues 14 to 34 (LTPTWSVATVLTIFVFVSLIV). Topologically, residues 35–63 (ERSIHRLSNWLQKTKRKPLFAALEKMKEE) are cytoplasmic. A helical transmembrane segment spans residues 64–84 (LMLLGFISLLLTATSSTIANI). At 85–158 (CVSSSFHNDR…SYEGMEQLHR (74 aa)) the chain is on the extracellular side. Residues 159-179 (FIFIMAVTHVTYSCLTMLLAI) traverse the membrane as a helical segment. Topologically, residues 180–281 (VKIHRWRIWE…MIRSMEEEFQ (102 aa)) are cytoplasmic. The helical transmembrane segment at 282–302 (KIVGVSGPLWGFVVGFMLFNI) threads the bilayer. Position 303 (Lys303) is a topological domain, extracellular. A helical membrane pass occupies residues 304–324 (GSNLYFWLAIIPITLVLLVGA). Over 325–366 (KLQHVIATLALENASITEYASGIKLRPRDELFWFKKPELLLS) the chain is Cytoplasmic. Residues 367 to 387 (LIHFIQFQNAFELASFFWFWW) traverse the membrane as a helical segment. At 388–406 (QFGYNSCFLRNHLLVYLRL) the chain is on the extracellular side. Residues 407 to 427 (ILGFSGQFLCSYSTLPLYALV) traverse the membrane as a helical segment. Over 428 to 554 (TQMGTNYKAA…SSSLPMRREC (127 aa)) the chain is Cytoplasmic. Residues 441–462 (QRVRETINGWGKATRRKRRHGL) are calmodulin-binding.

It belongs to the MLO family.

The protein localises to the membrane. Its function is as follows. May be involved in modulation of pathogen defense and leaf cell death. Activity seems to be regulated by Ca(2+)-dependent calmodulin binding and seems not to require heterotrimeric G proteins. In Arabidopsis thaliana (Mouse-ear cress), this protein is MLO-like protein 14 (MLO14).